The chain runs to 65 residues: MGVQVDKERCVGAGMCALTAPDVFTQDDDGLSEVLPGREATSGTHPLVGEAVRACPVGAVVLSSD.

Residues 2–29 enclose the 4Fe-4S ferredoxin-type domain; it reads GVQVDKERCVGAGMCALTAPDVFTQDDD. Cys10, Cys16, and Cys55 together coordinate [3Fe-4S] cluster.

The cofactor is [3Fe-4S] cluster.

Its function is as follows. Electron transport protein for the cytochrome P-450-SOY system. The protein is Ferredoxin soy (soyB) of Streptomyces griseus.